Here is a 2025-residue protein sequence, read N- to C-terminus: Pericentriolar material 1 protein (2025 aa).

Positions 1–91 (MATGGGPFEE…TFPHSRYMTQ (91 aa)) are disordered. At A2 the chain carries N-acetylalanine. The tract at residues 2–1458 (ATGGGPFEEV…TWVASNSELT (1457 aa)) is mediates interaction with DZIP1. Phosphoserine is present on residues S65, S68, S69, S93, S110, S116, S119, and S159. The tract at residues 111 to 140 (DLDQRSIGSDSQGRATAANNKRQLSENRKP) is disordered. A compositionally biased stretch (polar residues) spans 116 to 132 (SIGSDSQGRATAANNKR). The stretch at 218–301 (KASSMREDLV…QLRALQGRQA (84 aa)) forms a coiled coil. The segment at 354 to 390 (RDSQPPAVPDNRRQAESLSLTREISQSRNPSVSEHLP) is disordered. Over residues 369–385 (ESLSLTREISQSRNPSV) the composition is skewed to polar residues. At S370 the chain carries Phosphoserine. S372 is subject to Phosphoserine; by PLK4. The residue at position 384 (S384) is a Phosphoserine. K399 carries the N6-acetyllysine modification. Coiled-coil stretches lie at residues 399 to 426 (KMRV…QHLN) and 492 to 518 (AEKL…YEQT). Disordered regions lie at residues 528–553 (ENTK…VTNI) and 565–586 (VNTN…VNSN). Acidic residues predominate over residues 531-540 (KDEETEESEY). Position 593 is a phosphoserine (S593). Residues 620 to 654 (AHGEDEEEEVEEEGVSGASLSSRRSSLVDEAPEDE) are disordered. The segment covering 623–633 (EDEEEEVEEEG) has biased composition (acidic residues). Residues 634–644 (VSGASLSSRRS) show a composition bias toward low complexity. S644 bears the Phosphoserine mark. 2 coiled-coil regions span residues 652-772 (EDEE…PDLQ) and 822-856 (SDMR…GLAE). A Phosphothreonine modification is found at T857. S859, S864, S867, and S870 each carry phosphoserine. Disordered stretches follow at residues 866 to 885 (RSDG…EKTM) and 913 to 940 (TDEE…NQNS). Over residues 870–879 (SENLCTPQQS) the composition is skewed to polar residues. At T875 the chain carries Phosphothreonine. Phosphoserine occurs at positions 957, 974, 985, and 988. Coiled-coil stretches lie at residues 985–1017 (SELS…CQTL) and 1061–1086 (QLTW…QNQH). Disordered regions lie at residues 1081-1105 (RQQN…PSSP) and 1149-1213 (FSQN…YDQE). Positions 1086 to 1096 (HPEKPRSKERG) are enriched in basic and acidic residues. Residues 1149-1169 (FSQNVSTPTEQQQPLAQNPSG) show a composition bias toward polar residues. 2 positions are modified to phosphoserine: S1182 and S1185. Over residues 1189–1198 (EKQRNQKQPE) the composition is skewed to basic and acidic residues. Phosphoserine is present on residues S1228, S1254, S1257, S1259, and S1260. Positions 1230-1310 (EKATNSNRKN…STQLKSRVKN (81 aa)) are disordered. Polar residues predominate over residues 1268-1285 (TTVTKTFKTRKASAQASL). A phosphoserine mark is found at S1315 and S1317. Residues 1319–1338 (SSTCEPCKNRNRHSAQTEEP) are disordered. T1466 carries the phosphothreonine modification. Phosphoserine is present on residues S1571, S1695, S1729, S1766, S1769, S1777, and S1783. A disordered region spans residues 1720–1943 (KRILEGDHGS…AGSPDTESPV (224 aa)). Basic and acidic residues predominate over residues 1756-1768 (YDAKGPKNVRSDV). Residues 1784–1798 (INLSKAESQALTNYG) are compositionally biased toward polar residues. The segment covering 1800–1816 (GEDENEDEEMEDFEESP) has biased composition (acidic residues). 4 stretches are compositionally biased toward polar residues: residues 1818-1828 (DIQTSLQANTE), 1849-1858 (ESTNVPSDQE), 1879-1901 (ENEQ…SSKQ), and 1925-1934 (AQETPESSLA). A phosphoserine mark is found at S1959 and S1978.

It belongs to the PCM1 family. In terms of assembly, self-associates. Interacts with BBS4, BBS8, CETN3, HAP1, NDE1, NDEL1, MAP1LC3B, GABARAPAL2, and GABARAP. Interacts with CEP131; the interaction increases in response to ultraviolet light (UV) radiation. Associates with microtubule; association to microtubule is reduced in response to cellular stress, such as ultraviolet light (UV) radiation or heat shock, in a process that requires p38 MAP kinase signaling. Interacts with C2CD3. Interacts with CFAP263. Interacts with SSX2IP. Interacts with CCDC13. Interacts with CEP290. Interacts with PARD6A. Interacts with KIAA0753/OFIP, CEP20/FOR20 and OFD1; the interaction with CEP20/FOR20 and OFD1 may be mediated by KIAA0753/OFIP. Interacts with CCDC66. Interacts with CCDC61. Interacts with DZIP1; localizes DZIP1 and the associated BBSome to centriolar satellite. Interacts with CSTPP1, TTLL1, TPGS1 and LRRC49. Interacts with CFAP53. Ubiquitinated. Undergoes monoubiquitination catalyzed by the E3 ubiquitin-protein ligase MIB1 in proliferating cells, preventing cilia formation. Monoubiquitination by MIB1 is inhibited in response to cellular stress, such as ultraviolet light (UV) radiation or heat shock, resulting in cilia formation initiation. In terms of processing, phosphorylated on multiple serine and threonine residues by DYRK3 during the G2-to-M transition, after the nuclear-envelope breakdown. Phosphorylation by DYRK3 promotes disassembly of pericentriolar material. Phosphorylation at Ser-372 mediated by PLK4 is required to maintain the integrity of centriolar satellites. As to expression, expressed in the hippocampus and dentate gyrus, the columnar epithelial cells of bronchioles, the olfactory epithelium, the pericardium and the inner segment of the retina.

The protein resides in the cytoplasm. It is found in the cytoskeleton. It localises to the microtubule organizing center. Its subcellular location is the centrosome. The protein localises to the cytoplasmic granule. The protein resides in the centriolar satellite. It is found in the cilium basal body. Functionally, required for centrosome assembly and function. Essential for the correct localization of several centrosomal proteins including CEP250, CETN3, PCNT and NEK2. Required to anchor microtubules to the centrosome. Also involved in cilium biogenesis by recruiting the BBSome, a ciliary protein complex involved in cilium biogenesis, to the centriolar satellites. Recruits the tubulin polyglutamylase complex (TPGC) to centriolar satellites. The chain is Pericentriolar material 1 protein from Mus musculus (Mouse).